A 624-amino-acid chain; its full sequence is DNA-directed RNA polymerase subunit gamma (624 aa).

Positions 70, 72, 85, and 88 each coordinate Zn(2+). Asp466, Asp468, and Asp470 together coordinate Mg(2+).

Belongs to the RNA polymerase beta' chain family. RpoC1 subfamily. As to quaternary structure, in cyanobacteria the RNAP catalytic core is composed of 2 alpha, 1 beta, 1 beta', 1 gamma and 1 omega subunit. When a sigma factor is associated with the core the holoenzyme is formed, which can initiate transcription. Requires Mg(2+) as cofactor. Zn(2+) is required as a cofactor.

The enzyme catalyses RNA(n) + a ribonucleoside 5'-triphosphate = RNA(n+1) + diphosphate. In terms of biological role, DNA-dependent RNA polymerase catalyzes the transcription of DNA into RNA using the four ribonucleoside triphosphates as substrates. This chain is DNA-directed RNA polymerase subunit gamma, found in Synechococcus sp. (strain ATCC 27144 / PCC 6301 / SAUG 1402/1) (Anacystis nidulans).